Reading from the N-terminus, the 377-residue chain is Stimulator of interferon genes protein (377 aa).

Residues 1–21 (MRRAEENNGFGTIPKRRNQHT) lie on the Cytoplasmic side of the membrane. The chain crosses the membrane as a helical span at residues 22–42 (PFYASIGMIVVIIVAFTSYHI). The Extracellular segment spans residues 43–57 (TSYGDDRNRAMRQYS). A helical membrane pass occupies residues 58–80 (FTFSLAYLAFLVGELLRRCCLFA). The Cytoplasmic segment spans residues 81 to 101 (EEYRHIETRYNGSLKKAIQTT). A helical membrane pass occupies residues 102 to 122 (FSFGHNNVLFVASLLFFVVFV). The Extracellular segment spans residues 123–154 (ASNDPNGSSSVIQGNSTAEPHTEMRQTSGWQG). A helical membrane pass occupies residues 155 to 175 (LWGQFIISALLTPLVVHLLGL). Residues 176 to 377 (RELSKVEESQ…LKDSELEIGG (202 aa)) are Cytoplasmic-facing. 2',3'-cGAMP is bound by residues Y206, R272, 278–279 (RH), and T303. Residues Y206, R272, R278, and 300–303 (EYAT) each bind 3',3'-c-di-GMP.

The protein belongs to the TMEM173 family. Homodimer.

It localises to the endoplasmic reticulum membrane. In terms of biological role, sensor of cytosolic DNA from bacteria and viruses that promotes autophagy. Acts by recognizing and binding cyclic GMP-AMP (cGAMP), a messenger produced by CGAS in response to DNA in the cytosol. Following cGAMP-binding, promotes the formation of autophagosomes, leading to target cytosolic DNA for degradation by the lysosome. Exhibits guanine base-specific ligand recognition. Binds 3'-3'linked cGAMP, 2'-3' linked cGAMP and 3'-3' linked c-di-GMP with much greater affinity as compared to 3'-3' linked c-di-AMP. Lacks the C-terminal tail (CTT) found in mammalian orthologs which is essential for interferon signaling. This chain is Stimulator of interferon genes protein, found in Nematostella vectensis (Starlet sea anemone).